A 234-amino-acid polypeptide reads, in one-letter code: UPF0173 metal-dependent hydrolase RHECIAT_CH0001941 (234 aa).

It belongs to the UPF0173 family.

The protein is UPF0173 metal-dependent hydrolase RHECIAT_CH0001941 of Rhizobium etli (strain CIAT 652).